We begin with the raw amino-acid sequence, 195 residues long: dCTP deaminase (195 aa).

DCTP-binding positions include 105 to 110 (RSSLGR), D123, 131 to 133 (TLE), Q152, Y166, K173, and Q177. E133 (proton donor/acceptor) is an active-site residue. The tract at residues 159 to 195 (KSPAERPYGAERGSKYQGQTGPQASRIQGDREFGGDQ) is disordered. Over residues 160–172 (SPAERPYGAERGS) the composition is skewed to basic and acidic residues. Polar residues predominate over residues 174 to 184 (YQGQTGPQASR). Residues 186-195 (QGDREFGGDQ) are compositionally biased toward basic and acidic residues.

This sequence belongs to the dCTP deaminase family. As to quaternary structure, homotrimer.

It catalyses the reaction dCTP + H2O + H(+) = dUTP + NH4(+). It participates in pyrimidine metabolism; dUMP biosynthesis; dUMP from dCTP (dUTP route): step 1/2. In terms of biological role, catalyzes the deamination of dCTP to dUTP. The polypeptide is dCTP deaminase (Natronomonas pharaonis (strain ATCC 35678 / DSM 2160 / CIP 103997 / JCM 8858 / NBRC 14720 / NCIMB 2260 / Gabara) (Halobacterium pharaonis)).